We begin with the raw amino-acid sequence, 421 residues long: MVLLKFHGGCQQIGMSCVEVETQKGRVLLDCGMSPDTGEIPKVDDKAVDAVIVSHAHLDHCGAIPFYKFKKIYCTHPTADLMFITWRDTLNLTKAYKEEDIQHAMENIECLNYYEERQITENIKFKFYNAGHILGSASIYLEVDGKKILYTGDINEGVSRTLLPADTDIDEIDVLIIESTYGSPLDIKPARKTLERQLIEEISETIENGGKVIIPVFAIGRAQEILLIINNYIRSGKLRDVPIYTDGSLIHATAVYMSYINWLNPKIKNMVENRINPFGEIKKADESLVFNKEPCIIVSTSGMVQGGPVLKYLKLLKDPKNKLILTGYQAEGTLGRELEEGAKEIQPFKNKIPIRGKVVKIEFSAHGDYNSLVRYIKKIPKPEKAIVMHGERYQSLSFAMTIWKTLKIPTFVPVRGTILPI.

Residues histidine 55, histidine 57, aspartate 59, histidine 60, histidine 132, aspartate 153, and histidine 389 each contribute to the Zn(2+) site.

This sequence belongs to the metallo-beta-lactamase superfamily. RNA-metabolizing metallo-beta-lactamase-like family. In terms of assembly, forms homodimers on heating to 60 degrees Celsius which may be the active form. It depends on Zn(2+) as a cofactor.

With respect to regulation, inhibited by imidazole. Its function is as follows. A 5'-3' exoribonuclease with a strong reference for 5'-monophosphorylated RNA and no endoribonuclease activty. The chain is RNase J-like protein from Methanocaldococcus jannaschii (strain ATCC 43067 / DSM 2661 / JAL-1 / JCM 10045 / NBRC 100440) (Methanococcus jannaschii).